The primary structure comprises 97 residues: Apolipoprotein C-II (97 aa).

The signal sequence occupies residues 1–22 (MGSRFFLALFLVLLVLGNEVQG). The segment at 63 to 71 (SVDEKLRDM) is lipid binding. A lipoprotein lipase cofactor region spans residues 75–97 (SSAAMSTYAGIFTDQLLTLLKGE).

This sequence belongs to the apolipoprotein C2 family. Proapolipoprotein C-II is synthesized as a sialic acid containing glycoprotein which is subsequently desialylated prior to its proteolytic processing. In terms of processing, proapolipoprotein C-II, the major form found in plasma undergoes proteolytic cleavage of its N-terminal hexapeptide to generate the mature form apolipoprotein C-II, which occurs as the minor form in plasma.

It is found in the secreted. Its function is as follows. Component of chylomicrons, very low-density lipoproteins (VLDL), low-density lipoproteins (LDL), and high-density lipoproteins (HDL) in plasma. Plays an important role in lipoprotein metabolism as an activator of lipoprotein lipase. The chain is Apolipoprotein C-II (Apoc2) from Grammomys surdaster (African woodland thicket rat).